Consider the following 945-residue polypeptide: Isoleucine--tRNA ligase (945 aa).

Positions 66–76 (PYANGDIHLGH) match the 'HIGH' region motif. Glu581 provides a ligand contact to L-isoleucyl-5'-AMP. The 'KMSKS' region motif lies at 622 to 626 (KMSKS). Residue Lys625 participates in ATP binding. Cys908, Cys911, Cys928, and Cys931 together coordinate Zn(2+).

Belongs to the class-I aminoacyl-tRNA synthetase family. IleS type 1 subfamily. Monomer. It depends on Zn(2+) as a cofactor.

It localises to the cytoplasm. It catalyses the reaction tRNA(Ile) + L-isoleucine + ATP = L-isoleucyl-tRNA(Ile) + AMP + diphosphate. In terms of biological role, catalyzes the attachment of isoleucine to tRNA(Ile). As IleRS can inadvertently accommodate and process structurally similar amino acids such as valine, to avoid such errors it has two additional distinct tRNA(Ile)-dependent editing activities. One activity is designated as 'pretransfer' editing and involves the hydrolysis of activated Val-AMP. The other activity is designated 'posttransfer' editing and involves deacylation of mischarged Val-tRNA(Ile). This Paraburkholderia phytofirmans (strain DSM 17436 / LMG 22146 / PsJN) (Burkholderia phytofirmans) protein is Isoleucine--tRNA ligase.